The primary structure comprises 484 residues: uncharacterized protein (484 aa).

Residues 47–226 (TLPIPAAVVK…TEVTVKIFKF (180 aa)) enclose the FAD-binding PCMH-type domain.

It belongs to the FAD-binding oxidoreductase/transferase type 4 family.

This is an uncharacterized protein from Escherichia coli O157:H7.